Reading from the N-terminus, the 95-residue chain is Co-chaperonin GroES (95 aa).

Belongs to the GroES chaperonin family. As to quaternary structure, heptamer of 7 subunits arranged in a ring. Interacts with the chaperonin GroEL.

It localises to the cytoplasm. Its function is as follows. Together with the chaperonin GroEL, plays an essential role in assisting protein folding. The GroEL-GroES system forms a nano-cage that allows encapsulation of the non-native substrate proteins and provides a physical environment optimized to promote and accelerate protein folding. GroES binds to the apical surface of the GroEL ring, thereby capping the opening of the GroEL channel. In Rickettsia typhi (strain ATCC VR-144 / Wilmington), this protein is Co-chaperonin GroES.